A 307-amino-acid polypeptide reads, in one-letter code: Coproporphyrin III ferrochelatase (307 aa).

Residues Y12, R29, 45–46 (RY), S53, and Y124 each bind Fe-coproporphyrin III. Residues H181 and E263 each contribute to the Fe(2+) site.

This sequence belongs to the ferrochelatase family.

The protein localises to the cytoplasm. It carries out the reaction Fe-coproporphyrin III + 2 H(+) = coproporphyrin III + Fe(2+). Its pathway is porphyrin-containing compound metabolism; protoheme biosynthesis. Its function is as follows. Involved in coproporphyrin-dependent heme b biosynthesis. Catalyzes the insertion of ferrous iron into coproporphyrin III to form Fe-coproporphyrin III. In Staphylococcus aureus (strain COL), this protein is Coproporphyrin III ferrochelatase.